The chain runs to 148 residues: Glutamyl-tRNA(Gln) amidotransferase subunit C, mitochondrial (148 aa).

This sequence belongs to the GatC family. As to quaternary structure, subunit of the heterotrimeric GatCAB amidotransferase (AdT) complex, composed of A, B and C subunits.

The protein resides in the mitochondrion. It carries out the reaction L-glutamyl-tRNA(Gln) + L-glutamine + ATP + H2O = L-glutaminyl-tRNA(Gln) + L-glutamate + ADP + phosphate + H(+). Allows the formation of correctly charged Gln-tRNA(Gln) through the transamidation of misacylated Glu-tRNA(Gln) in the mitochondria. The reaction takes place in the presence of glutamine and ATP through an activated gamma-phospho-Glu-tRNA(Gln). The chain is Glutamyl-tRNA(Gln) amidotransferase subunit C, mitochondrial from Drosophila sechellia (Fruit fly).